The chain runs to 140 residues: Phospholipase A2 (140 aa).

Residues 1 to 21 form the signal peptide; the sequence is MNPAHLLVLAAVCISLSGASS. Positions 22 to 27 are excised as a propeptide; it reads IAPQPL. Cystine bridges form between C38/C97, C52/C139, C54/C70, C69/C125, C76/C118, C86/C111, and C104/C116. An N-linked (GlcNAc...) asparagine glycan is attached at N39. The Ca(2+) site is built by Y53, G55, and G57. Residue H73 is part of the active site. Ca(2+) is bound at residue D74. N-linked (GlcNAc...) asparagine glycosylation is present at N107. D119 is a catalytic residue.

Belongs to the phospholipase A2 family. Group I subfamily. D49 sub-subfamily. It depends on Ca(2+) as a cofactor. In terms of tissue distribution, expressed by the venom gland.

It is found in the secreted. It carries out the reaction a 1,2-diacyl-sn-glycero-3-phosphocholine + H2O = a 1-acyl-sn-glycero-3-phosphocholine + a fatty acid + H(+). Functionally, PLA2 catalyzes the calcium-dependent hydrolysis of the 2-acyl groups in 3-sn-phosphoglycerides. This Micrurus altirostris (Uruguayan coral snake) protein is Phospholipase A2.